Reading from the N-terminus, the 262-residue chain is Ribose-5-phosphate isomerase A (262 aa).

Substrate-binding positions include 33 to 36, 89 to 92, and 102 to 105; these read TGST, DGTD, and KGGG. Residue Glu-111 is the Proton acceptor of the active site. Position 129 (Lys-129) interacts with substrate.

Belongs to the ribose 5-phosphate isomerase family. As to quaternary structure, homodimer.

It carries out the reaction aldehydo-D-ribose 5-phosphate = D-ribulose 5-phosphate. It functions in the pathway carbohydrate degradation; pentose phosphate pathway; D-ribose 5-phosphate from D-ribulose 5-phosphate (non-oxidative stage): step 1/1. In terms of biological role, catalyzes the reversible conversion of ribose-5-phosphate to ribulose 5-phosphate. The chain is Ribose-5-phosphate isomerase A from Jannaschia sp. (strain CCS1).